The chain runs to 334 residues: N-acetyl-gamma-glutamyl-phosphate reductase (334 aa).

The active site involves Cys-154.

This sequence belongs to the NAGSA dehydrogenase family. Type 1 subfamily.

The protein localises to the cytoplasm. It catalyses the reaction N-acetyl-L-glutamate 5-semialdehyde + phosphate + NADP(+) = N-acetyl-L-glutamyl 5-phosphate + NADPH + H(+). Its pathway is amino-acid biosynthesis; L-arginine biosynthesis; N(2)-acetyl-L-ornithine from L-glutamate: step 3/4. Catalyzes the NADPH-dependent reduction of N-acetyl-5-glutamyl phosphate to yield N-acetyl-L-glutamate 5-semialdehyde. This Buchnera aphidicola subsp. Acyrthosiphon pisum (strain 5A) protein is N-acetyl-gamma-glutamyl-phosphate reductase.